Reading from the N-terminus, the 581-residue chain is ATP-dependent lipid A-core flippase (581 aa).

A run of 6 helical transmembrane segments spans residues 21–41 (TVAIVAIIGMIGYSGMDALFI), 65–85 (FVVIALVIGRGVFNFMSSYCL), 138–158 (ALLIVVREGAFVVFLLAVMFY), 161–181 (WQLSLIFLVIIPLVAVIVTVV), 246–266 (LSVSIIQVLAASAMAVILWVV), and 271–291 (MIDTISSGDFVVLISSMMMLL). Residues 24 to 306 (IVAIIGMIGY…LANVNSDMQR (283 aa)) form the ABC transmembrane type-1 domain. Residues 338–575 (IEVKNVTFKY…NGTYSALCKM (238 aa)) enclose the ABC transporter domain. 372 to 379 (GRSGSGKS) is an ATP binding site.

The protein belongs to the ABC transporter superfamily. Lipid exporter (TC 3.A.1.106) family. In terms of assembly, homodimer.

Its subcellular location is the cell inner membrane. It carries out the reaction ATP + H2O + lipid A-core oligosaccharideSide 1 = ADP + phosphate + lipid A-core oligosaccharideSide 2.. In terms of biological role, involved in lipopolysaccharide (LPS) biosynthesis. Translocates lipid A-core from the inner to the outer leaflet of the inner membrane. Transmembrane domains (TMD) form a pore in the inner membrane and the ATP-binding domain (NBD) is responsible for energy generation. This Pseudoalteromonas translucida (strain TAC 125) protein is ATP-dependent lipid A-core flippase.